Here is a 110-residue protein sequence, read N- to C-terminus: Large ribosomal subunit protein uL22 (110 aa).

The protein belongs to the universal ribosomal protein uL22 family. In terms of assembly, part of the 50S ribosomal subunit.

In terms of biological role, this protein binds specifically to 23S rRNA; its binding is stimulated by other ribosomal proteins, e.g. L4, L17, and L20. It is important during the early stages of 50S assembly. It makes multiple contacts with different domains of the 23S rRNA in the assembled 50S subunit and ribosome. Functionally, the globular domain of the protein is located near the polypeptide exit tunnel on the outside of the subunit, while an extended beta-hairpin is found that lines the wall of the exit tunnel in the center of the 70S ribosome. This chain is Large ribosomal subunit protein uL22, found in Vibrio cholerae serotype O1 (strain ATCC 39541 / Classical Ogawa 395 / O395).